The sequence spans 188 residues: Large ribosomal subunit protein eL18 (188 aa).

This sequence belongs to the eukaryotic ribosomal protein eL18 family.

The protein localises to the cytoplasm. This chain is Large ribosomal subunit protein eL18 (RpL18), found in Drosophila melanogaster (Fruit fly).